Consider the following 560-residue polypeptide: Light-independent protochlorophyllide reductase subunit N (560 aa).

[4Fe-4S] cluster is bound by residues Cys24, Cys49, and Cys109. Over residues 173–182 (NSLFNQSSNS) the composition is skewed to low complexity. The interval 173-210 (NSLFNQSSNSPENLKTLNTKKDTFQNSTENSKTFSAEK) is disordered. Positions 196–206 (FQNSTENSKTF) are enriched in polar residues.

Belongs to the BchN/ChlN family. Protochlorophyllide reductase is composed of three subunits; ChlL, ChlN and ChlB. Forms a heterotetramer of two ChlB and two ChlN subunits. It depends on [4Fe-4S] cluster as a cofactor.

The protein resides in the plastid. Its subcellular location is the chloroplast. The enzyme catalyses chlorophyllide a + oxidized 2[4Fe-4S]-[ferredoxin] + 2 ADP + 2 phosphate = protochlorophyllide a + reduced 2[4Fe-4S]-[ferredoxin] + 2 ATP + 2 H2O. The protein operates within porphyrin-containing compound metabolism; chlorophyll biosynthesis (light-independent). In terms of biological role, component of the dark-operative protochlorophyllide reductase (DPOR) that uses Mg-ATP and reduced ferredoxin to reduce ring D of protochlorophyllide (Pchlide) to form chlorophyllide a (Chlide). This reaction is light-independent. The NB-protein (ChlN-ChlB) is the catalytic component of the complex. The polypeptide is Light-independent protochlorophyllide reductase subunit N (Tetradesmus obliquus (Green alga)).